A 203-amino-acid polypeptide reads, in one-letter code: uncharacterized protein (203 aa).

This is an uncharacterized protein from Magallana gigas (Pacific oyster).